A 251-amino-acid polypeptide reads, in one-letter code: Mediator of RNA polymerase II transcription subunit 7 (251 aa).

The disordered stretch occupies residues 1–38 (MLPGFGAQTVSPFPNPPEYASAYTSDRINNGSAPPPPH). Polar residues predominate over residues 22 to 32 (AYTSDRINNGS).

This sequence belongs to the Mediator complex subunit 7 family. As to quaternary structure, component of the Mediator complex. Interacts with mdt-10 and mdt-21. Interacts with RNA polymerase II.

The protein localises to the nucleus. Component of the Mediator complex, a coactivator involved in the regulated transcription of nearly all RNA polymerase II-dependent genes. Mediator functions as a bridge to convey information from gene-specific regulatory proteins to the basal RNA polymerase II transcription machinery. Mediator is recruited to promoters by direct interactions with regulatory proteins and serves as a scaffold for the assembly of a functional preinitiation complex with RNA polymerase II and the general transcription factors. Required for germ cell development and gonadal growth. This is Mediator of RNA polymerase II transcription subunit 7 (let-49) from Caenorhabditis elegans.